Here is a 184-residue protein sequence, read N- to C-terminus: CDP-archaeol synthase (184 aa).

The next 5 helical transmembrane spans lie at 4–24 (IIMV…NPGA), 54–74 (FIGG…IIYI), 86–106 (IISA…GDIT), 122–142 (GSLL…FIFA), and 145–165 (FFLE…LTPP).

The protein belongs to the CDP-archaeol synthase family. It depends on Mg(2+) as a cofactor.

The protein localises to the cell membrane. It catalyses the reaction 2,3-bis-O-(geranylgeranyl)-sn-glycerol 1-phosphate + CTP + H(+) = CDP-2,3-bis-O-(geranylgeranyl)-sn-glycerol + diphosphate. It functions in the pathway membrane lipid metabolism; glycerophospholipid metabolism. Functionally, catalyzes the formation of CDP-2,3-bis-(O-geranylgeranyl)-sn-glycerol (CDP-archaeol) from 2,3-bis-(O-geranylgeranyl)-sn-glycerol 1-phosphate (DGGGP) and CTP. This reaction is the third ether-bond-formation step in the biosynthesis of archaeal membrane lipids. This is CDP-archaeol synthase from Picrophilus torridus (strain ATCC 700027 / DSM 9790 / JCM 10055 / NBRC 100828 / KAW 2/3).